Consider the following 103-residue polypeptide: Histone H4 (103 aa).

Positions 1 to 14 (MTGRGKGGKGLGKG) are enriched in gly residues. Residues 1–20 (MTGRGKGGKGLGKGGAKRHR) form a disordered region. Lysine 6 and lysine 13 each carry N6-acetyl-N6-methyllysine; alternate. The DNA-binding element occupies 17–21 (KRHRK).

The protein belongs to the histone H4 family. In terms of assembly, the nucleosome is a histone octamer containing two molecules each of H2A, H2B, H3 and H4 assembled in one H3-H4 heterotetramer and two H2A-H2B heterodimers. The octamer wraps approximately 147 bp of DNA.

The protein localises to the nucleus. It is found in the chromosome. Its function is as follows. Core component of nucleosome. Nucleosomes wrap and compact DNA into chromatin, limiting DNA accessibility to the cellular machineries which require DNA as a template. Histones thereby play a central role in transcription regulation, DNA repair, DNA replication and chromosomal stability. DNA accessibility is regulated via a complex set of post-translational modifications of histones, also called histone code, and nucleosome remodeling. In Trichogramma cacaeciae (Moth egg parasite), this protein is Histone H4.